The following is a 130-amino-acid chain: Small ribosomal subunit protein uS11 (130 aa).

Belongs to the universal ribosomal protein uS11 family. As to quaternary structure, part of the 30S ribosomal subunit. Interacts with proteins S7 and S18. Binds to IF-3.

Located on the platform of the 30S subunit, it bridges several disparate RNA helices of the 16S rRNA. Forms part of the Shine-Dalgarno cleft in the 70S ribosome. The protein is Small ribosomal subunit protein uS11 of Teredinibacter turnerae (strain ATCC 39867 / T7901).